Reading from the N-terminus, the 262-residue chain is Acyl-[acyl-carrier-protein]--UDP-N-acetylglucosamine O-acyltransferase (262 aa).

Belongs to the transferase hexapeptide repeat family. LpxA subfamily. Homotrimer.

It localises to the cytoplasm. It catalyses the reaction a (3R)-hydroxyacyl-[ACP] + UDP-N-acetyl-alpha-D-glucosamine = a UDP-3-O-[(3R)-3-hydroxyacyl]-N-acetyl-alpha-D-glucosamine + holo-[ACP]. Its pathway is glycolipid biosynthesis; lipid IV(A) biosynthesis; lipid IV(A) from (3R)-3-hydroxytetradecanoyl-[acyl-carrier-protein] and UDP-N-acetyl-alpha-D-glucosamine: step 1/6. Functionally, involved in the biosynthesis of lipid A, a phosphorylated glycolipid that anchors the lipopolysaccharide to the outer membrane of the cell. The chain is Acyl-[acyl-carrier-protein]--UDP-N-acetylglucosamine O-acyltransferase from Vibrio atlanticus (strain LGP32) (Vibrio splendidus (strain Mel32)).